Here is a 279-residue protein sequence, read N- to C-terminus: MTTRIDTKFAELKAEGRPALVTYFMGGDPDLETALKVMKALPKAGADVIELGMPFSDPMADGPAIQAAGLRALNAGQTLAKTLYMAAEFRKEDDTTPIVMMGYYNPIYVYGVERFLTDAKASGVDGLIVVDLPSEMDAELCIPAMKAGINFIRLTTPTTDDKRLPKVLHNSSGFVYYVSMNGITGAAIADTAKVGEAVRHIKKSTDLPICVGFGVKTPEQAAAIATHADGVVVGTAIVNAIAGELDEKGKVKGDPVAAATQLVHALAESVRATRLEAAQ.

Active-site proton acceptor residues include E50 and D61.

It belongs to the TrpA family. As to quaternary structure, tetramer of two alpha and two beta chains.

The enzyme catalyses (1S,2R)-1-C-(indol-3-yl)glycerol 3-phosphate + L-serine = D-glyceraldehyde 3-phosphate + L-tryptophan + H2O. It functions in the pathway amino-acid biosynthesis; L-tryptophan biosynthesis; L-tryptophan from chorismate: step 5/5. Its function is as follows. The alpha subunit is responsible for the aldol cleavage of indoleglycerol phosphate to indole and glyceraldehyde 3-phosphate. The chain is Tryptophan synthase alpha chain from Brucella suis (strain ATCC 23445 / NCTC 10510).